The primary structure comprises 117 residues: B-box domain protein 30 (117 aa).

A B box-type; atypical zinc finger spans residues 27-73 (KAPVSCELCGENATVYCEADAAFLCRKCDRWVHSANFLARRHLRRVI). The Zn(2+) site is built by Cys-32, Cys-35, Cys-54, and His-59. The PFVFL motif lies at 113-117 (PFVFL).

Interacts with CO (via B-box) and with TPL (via PFVFL motif). As to expression, highly expressed in shoot apical meristems and in vascular tissues of leaves. Also detected in petioles.

Its subcellular location is the nucleus. In terms of biological role, developmental regulator acting by forming heterodimeric complexes, that sequester CO and CO-like (COL) proteins into non-functional complexes. Engages CO and the transcriptional repressor TPL in a tripartite complex. Involved in the CO-mediated long-day flowering-promotion pathway. In Arabidopsis thaliana (Mouse-ear cress), this protein is B-box domain protein 30.